The sequence spans 368 residues: Homoserine O-acetyltransferase (368 aa).

The AB hydrolase-1 domain occupies 43-346; that stretch reads ILLEHALTGT…EYGHDAFLVE (304 aa). Residue S145 is the Nucleophile of the active site. R212 is a substrate binding site. Catalysis depends on residues D307 and H340. Substrate is bound at residue D341.

This sequence belongs to the AB hydrolase superfamily. MetX family. As to quaternary structure, homodimer.

Its subcellular location is the cytoplasm. The enzyme catalyses L-homoserine + acetyl-CoA = O-acetyl-L-homoserine + CoA. Its pathway is amino-acid biosynthesis; L-methionine biosynthesis via de novo pathway; O-acetyl-L-homoserine from L-homoserine: step 1/1. Functionally, transfers an acetyl group from acetyl-CoA to L-homoserine, forming acetyl-L-homoserine. The chain is Homoserine O-acetyltransferase from Listeria innocua serovar 6a (strain ATCC BAA-680 / CLIP 11262).